A 456-amino-acid chain; its full sequence is Trigger factor (456 aa).

The PPIase FKBP-type domain occupies 166-245 (GDYANIDLNA…VNSVKAEELP (80 aa)).

The protein belongs to the FKBP-type PPIase family. Tig subfamily.

Its subcellular location is the cytoplasm. The enzyme catalyses [protein]-peptidylproline (omega=180) = [protein]-peptidylproline (omega=0). Involved in protein export. Acts as a chaperone by maintaining the newly synthesized protein in an open conformation. Functions as a peptidyl-prolyl cis-trans isomerase. The chain is Trigger factor from Bifidobacterium adolescentis (strain ATCC 15703 / DSM 20083 / NCTC 11814 / E194a).